Consider the following 341-residue polypeptide: L-threonine 3-dehydrogenase (341 aa).

C38 is a Zn(2+) binding site. Residues T40 and H43 each act as charge relay system in the active site. Zn(2+)-binding residues include H63, E64, C93, C96, C99, and C107. Residues I175, D195, R200, 262-264 (LGI), and 286-287 (IY) contribute to the NAD(+) site.

The protein belongs to the zinc-containing alcohol dehydrogenase family. In terms of assembly, homotetramer. Zn(2+) is required as a cofactor.

Its subcellular location is the cytoplasm. It catalyses the reaction L-threonine + NAD(+) = (2S)-2-amino-3-oxobutanoate + NADH + H(+). It participates in amino-acid degradation; L-threonine degradation via oxydo-reductase pathway; glycine from L-threonine: step 1/2. Functionally, catalyzes the NAD(+)-dependent oxidation of L-threonine to 2-amino-3-ketobutyrate. The polypeptide is L-threonine 3-dehydrogenase (Salmonella gallinarum (strain 287/91 / NCTC 13346)).